Here is an 85-residue protein sequence, read N- to C-terminus: Beta-insect depressant toxin BmKITa (85 aa).

The signal sequence occupies residues 1 to 21; that stretch reads MKLFLLLLISASMLIDGLVNA. The 61-residue stretch at 22 to 82 folds into the LCN-type CS-alpha/beta domain; the sequence is DGYIRGSNGC…TWKSESNTCG (61 aa). Disulfide bonds link C31–C81, C35–C56, C42–C63, and C46–C65. At G82 the chain carries Glycine amide.

Expressed by the venom gland.

The protein resides in the secreted. Its function is as follows. Depressant insect beta-toxins cause a transient contraction paralysis followed by a slow flaccid paralysis. They bind voltage-independently at site-4 of sodium channels (Nav) and shift the voltage of activation toward more negative potentials thereby affecting sodium channel activation and promoting spontaneous and repetitive firing. This toxin also displays an evident analgesic effect but is devoid of any toxicity on mice. The protein is Beta-insect depressant toxin BmKITa of Olivierus martensii (Manchurian scorpion).